The sequence spans 247 residues: Adenosylcobinamide-GDP ribazoletransferase (247 aa).

The next 5 membrane-spanning stretches (helical) occupy residues 34-54, 59-79, 113-133, 138-158, and 194-214; these read IITF…VFMV, CGAP…TGGF, GGLA…ELAL, ILAS…LLMY, and VLLP…AIFI.

It belongs to the CobS family. The cofactor is Mg(2+).

Its subcellular location is the cell inner membrane. It carries out the reaction alpha-ribazole + adenosylcob(III)inamide-GDP = adenosylcob(III)alamin + GMP + H(+). The catalysed reaction is alpha-ribazole 5'-phosphate + adenosylcob(III)inamide-GDP = adenosylcob(III)alamin 5'-phosphate + GMP + H(+). Its pathway is cofactor biosynthesis; adenosylcobalamin biosynthesis; adenosylcobalamin from cob(II)yrinate a,c-diamide: step 7/7. In terms of biological role, joins adenosylcobinamide-GDP and alpha-ribazole to generate adenosylcobalamin (Ado-cobalamin). Also synthesizes adenosylcobalamin 5'-phosphate from adenosylcobinamide-GDP and alpha-ribazole 5'-phosphate. The chain is Adenosylcobinamide-GDP ribazoletransferase from Escherichia coli O81 (strain ED1a).